The primary structure comprises 189 residues: Large ribosomal subunit protein bL17 (189 aa).

A disordered region spans residues 136-189 (KAAPAAEEEVVETEEAPAVEAEAAESEEAPAAEAEAAEAEAAETEEAPAAEDKK). Over residues 141 to 189 (AEEEVVETEEAPAVEAEAAESEEAPAAEAEAAEAEAAETEEAPAAEDKK) the composition is skewed to acidic residues.

It belongs to the bacterial ribosomal protein bL17 family. Part of the 50S ribosomal subunit. Contacts protein L32.

The protein is Large ribosomal subunit protein bL17 of Paenarthrobacter aurescens (strain TC1).